Reading from the N-terminus, the 363-residue chain is MGSRILVINPGSTSTKVAIFNEGKISFDAEVSHPRERIDKFSTVMEQKEFRSAAVMDLIKDELAKGTPDMVVGRGGLLKPIPGGPYSINDAMISDLESGRYGVHPCNLGAILAREFAEFWEVPSMIMDPVVTDEMDPVAKVTGLPEIKRRSVFHALSQRGVARSVAAEMGLEYEQAKFIVGHMGGGVSIGAHRYGKVVDVINALDGEGPFSPERSGTLPILPVLNLVESGQYTFDEMRKVVTSRSGVLGLLGTNDMREVQARMEEGDDEARLVLEALVYNASKYICSFIPALMKDDPQKRPIDAIILTGGVARSKLLVKAVEDVVGFIAPVKVVTGLEEMEVMGRGGLAVLRGEMQPQEYHSD.

This sequence belongs to the acetokinase family.

The protein localises to the cytoplasm. The enzyme catalyses butanoate + ATP = butanoyl phosphate + ADP. The polypeptide is Probable butyrate kinase (Maridesulfovibrio salexigens (strain ATCC 14822 / DSM 2638 / NCIMB 8403 / VKM B-1763) (Desulfovibrio salexigens)).